Reading from the N-terminus, the 348-residue chain is Holliday junction branch migration complex subunit RuvB (348 aa).

The tract at residues threonine 4–tyrosine 198 is large ATPase domain (RuvB-L). ATP-binding positions include leucine 37, arginine 38, glycine 79, lysine 82, threonine 83, threonine 84, glutamate 145–phenylalanine 147, arginine 188, tyrosine 198, and arginine 235. Residue threonine 83 coordinates Mg(2+). The small ATPAse domain (RuvB-S) stretch occupies residues proline 199 to glutamine 269. Residues serine 272 to arginine 348 form a head domain (RuvB-H) region. Arginine 327 and arginine 332 together coordinate DNA.

The protein belongs to the RuvB family. As to quaternary structure, homohexamer. Forms an RuvA(8)-RuvB(12)-Holliday junction (HJ) complex. HJ DNA is sandwiched between 2 RuvA tetramers; dsDNA enters through RuvA and exits via RuvB. An RuvB hexamer assembles on each DNA strand where it exits the tetramer. Each RuvB hexamer is contacted by two RuvA subunits (via domain III) on 2 adjacent RuvB subunits; this complex drives branch migration. In the full resolvosome a probable DNA-RuvA(4)-RuvB(12)-RuvC(2) complex forms which resolves the HJ.

It is found in the cytoplasm. It catalyses the reaction ATP + H2O = ADP + phosphate + H(+). Functionally, the RuvA-RuvB-RuvC complex processes Holliday junction (HJ) DNA during genetic recombination and DNA repair, while the RuvA-RuvB complex plays an important role in the rescue of blocked DNA replication forks via replication fork reversal (RFR). RuvA specifically binds to HJ cruciform DNA, conferring on it an open structure. The RuvB hexamer acts as an ATP-dependent pump, pulling dsDNA into and through the RuvAB complex. RuvB forms 2 homohexamers on either side of HJ DNA bound by 1 or 2 RuvA tetramers; 4 subunits per hexamer contact DNA at a time. Coordinated motions by a converter formed by DNA-disengaged RuvB subunits stimulates ATP hydrolysis and nucleotide exchange. Immobilization of the converter enables RuvB to convert the ATP-contained energy into a lever motion, pulling 2 nucleotides of DNA out of the RuvA tetramer per ATP hydrolyzed, thus driving DNA branch migration. The RuvB motors rotate together with the DNA substrate, which together with the progressing nucleotide cycle form the mechanistic basis for DNA recombination by continuous HJ branch migration. Branch migration allows RuvC to scan DNA until it finds its consensus sequence, where it cleaves and resolves cruciform DNA. This Bifidobacterium longum (strain DJO10A) protein is Holliday junction branch migration complex subunit RuvB.